The following is a 301-amino-acid chain: tRNA-cytidine(32) 2-sulfurtransferase (301 aa).

Residues 55–60 carry the PP-loop motif motif; sequence SGGKDS. [4Fe-4S] cluster is bound by residues cysteine 130, cysteine 133, and cysteine 221.

Belongs to the TtcA family. Homodimer. The cofactor is Mg(2+). Requires [4Fe-4S] cluster as cofactor.

It localises to the cytoplasm. It catalyses the reaction cytidine(32) in tRNA + S-sulfanyl-L-cysteinyl-[cysteine desulfurase] + AH2 + ATP = 2-thiocytidine(32) in tRNA + L-cysteinyl-[cysteine desulfurase] + A + AMP + diphosphate + H(+). The protein operates within tRNA modification. Catalyzes the ATP-dependent 2-thiolation of cytidine in position 32 of tRNA, to form 2-thiocytidine (s(2)C32). The sulfur atoms are provided by the cysteine/cysteine desulfurase (IscS) system. This chain is tRNA-cytidine(32) 2-sulfurtransferase, found in Acinetobacter baumannii (strain AB307-0294).